A 183-amino-acid polypeptide reads, in one-letter code: Capsid protein (183 aa).

The disordered stretch occupies residues 136–183 (NAPILSTLPETTVVRRRGRSPRRRTPSPRRRRSQSPRRRRSQSPASQC). Positions 149-176 (VRRRGRSPRRRTPSPRRRRSQSPRRRRS) are enriched in basic residues. Phosphoserine; by host is present on residues Ser-155, Ser-162, and Ser-170. The 1; half-length repeat unit spans residues 155–161 (SPRRRTP). The segment at 155 to 177 (SPRRRTPSPRRRRSQSPRRRRSQ) is 3 X 8 AA repeats of S-P-R-R-R-[PR]-S-Q. The short motif at 158–175 (RRTPSPRRRRSQSPRRRR) is the Bipartite nuclear localization signal element. 2 tandem repeats follow at residues 162-169 (SPRRRRSQ) and 170-177 (SPRRRRSQ). An RNA binding region spans residues 177 to 183 (QSPASQC).

It belongs to the orthohepadnavirus core antigen family. As to quaternary structure, homodimerizes, then multimerizes. Interacts with cytosol exposed regions of viral L glycoprotein present in the reticulum-to-Golgi compartment. Interacts with human FLNB. Phosphorylated form interacts with host importin alpha; this interaction depends on the exposure of the NLS, which itself depends upon genome maturation and/or phosphorylation of the capsid protein. Interacts with host NUP153. Post-translationally, phosphorylated by host SRPK1, SRPK2, and maybe protein kinase C or GAPDH. Phosphorylation is critical for pregenomic RNA packaging. Protein kinase C phosphorylation is stimulated by HBx protein and may play a role in transport of the viral genome to the nucleus at the late step during the viral replication cycle.

It localises to the virion. Its subcellular location is the host cytoplasm. In terms of biological role, self assembles to form an icosahedral capsid. Most capsids appear to be large particles with an icosahedral symmetry of T=4 and consist of 240 copies of capsid protein, though a fraction forms smaller T=3 particles consisting of 180 capsid proteins. Entering capsids are transported along microtubules to the nucleus. Phosphorylation of the capsid is thought to induce exposure of nuclear localization signal in the C-terminal portion of the capsid protein that allows binding to the nuclear pore complex via the importin (karyopherin-) alpha and beta. Capsids are imported in intact form through the nuclear pore into the nuclear basket, where it probably binds NUP153. Only capsids that contain the mature viral genome can release the viral DNA and capsid protein into the nucleoplasm. Immature capsids get stuck in the basket. Capsids encapsulate the pre-genomic RNA and the P protein. Pre-genomic RNA is reverse-transcribed into DNA while the capsid is still in the cytoplasm. The capsid can then either be directed to the nucleus, providing more genomes for transcription, or bud through the endoplasmic reticulum to provide new virions. In Hepatitis B virus genotype F2 (isolate Brazil/w4B) (HBV-F), this protein is Capsid protein.